The following is a 292-amino-acid chain: 4-hydroxy-tetrahydrodipicolinate synthase (292 aa).

T44 is a binding site for pyruvate. Y132 (proton donor/acceptor) is an active-site residue. K160 functions as the Schiff-base intermediate with substrate in the catalytic mechanism. I202 is a pyruvate binding site.

The protein belongs to the DapA family. In terms of assembly, homotetramer; dimer of dimers.

The protein localises to the cytoplasm. The catalysed reaction is L-aspartate 4-semialdehyde + pyruvate = (2S,4S)-4-hydroxy-2,3,4,5-tetrahydrodipicolinate + H2O + H(+). The protein operates within amino-acid biosynthesis; L-lysine biosynthesis via DAP pathway; (S)-tetrahydrodipicolinate from L-aspartate: step 3/4. Catalyzes the condensation of (S)-aspartate-beta-semialdehyde [(S)-ASA] and pyruvate to 4-hydroxy-tetrahydrodipicolinate (HTPA). The sequence is that of 4-hydroxy-tetrahydrodipicolinate synthase from Magnetococcus marinus (strain ATCC BAA-1437 / JCM 17883 / MC-1).